Reading from the N-terminus, the 601-residue chain is Beta-phellandrene synthase (601 aa).

The N-terminal 35 residues, 1–35 (MSTISIHHVGILRNPLPSKNKRALINNPWSLSLPR), are a transit peptide targeting the chloroplast. 2 residues coordinate Mn(2+): Asp356 and Asp360. Positions 356-360 (DDVYD) match the DDXXD motif motif. Homodimerization stretches follow at residues 362–368 (YGTLDEL) and 434–471 (EAKW…LSIP). Mn(2+) is bound by residues Asp499 and Glu507.

It belongs to the terpene synthase family. As to quaternary structure, homodimer. Requires Mn(2+) as cofactor. Mg(2+) serves as cofactor. As to expression, expressed in peltate glandular trichomes. Present at low levels in flowers, leaves and stems.

It is found in the plastid. Its subcellular location is the chloroplast. It catalyses the reaction (2E)-geranyl diphosphate = beta-phellandrene + diphosphate. It carries out the reaction (2E)-geranyl diphosphate = (1R,5R)-sabinene + diphosphate. It participates in secondary metabolite biosynthesis; terpenoid biosynthesis. Functionally, involved in the biosynthesis of phenolic monoterpenes natural products. Monoterpene synthase that catalyzes mainly the formation of olefins such as sabinene and beta-phellandrene, and minor amounts of other monoterpenes (e.g. myrcene, gamma-terpinene, alpha-thujene and alpha-pinene) from geranyl diphosphate (GPP). This is Beta-phellandrene synthase from Origanum vulgare (Wild marjoram).